We begin with the raw amino-acid sequence, 196 residues long: Holliday junction branch migration complex subunit RuvA (196 aa).

Residues 1-63 (MYDYIKGILT…EDAHLLYGFA (63 aa)) form a domain I region. The domain II stretch occupies residues 64 to 142 (TENEKSVFLS…MSEEAGPVQQ (79 aa)). The tract at residues 142 to 146 (QVAPS) is flexible linker. A domain III region spans residues 147-196 (SENIALEEAMEAMEALGYRPAELKKIKKFFEGTNDTAENYIKSALKMLMK).

It belongs to the RuvA family. As to quaternary structure, homotetramer. Forms an RuvA(8)-RuvB(12)-Holliday junction (HJ) complex. HJ DNA is sandwiched between 2 RuvA tetramers; dsDNA enters through RuvA and exits via RuvB. An RuvB hexamer assembles on each DNA strand where it exits the tetramer. Each RuvB hexamer is contacted by two RuvA subunits (via domain III) on 2 adjacent RuvB subunits; this complex drives branch migration. In the full resolvosome a probable DNA-RuvA(4)-RuvB(12)-RuvC(2) complex forms which resolves the HJ.

The protein resides in the cytoplasm. Functionally, the RuvA-RuvB-RuvC complex processes Holliday junction (HJ) DNA during genetic recombination and DNA repair, while the RuvA-RuvB complex plays an important role in the rescue of blocked DNA replication forks via replication fork reversal (RFR). RuvA specifically binds to HJ cruciform DNA, conferring on it an open structure. The RuvB hexamer acts as an ATP-dependent pump, pulling dsDNA into and through the RuvAB complex. HJ branch migration allows RuvC to scan DNA until it finds its consensus sequence, where it cleaves and resolves the cruciform DNA. This chain is Holliday junction branch migration complex subunit RuvA, found in Streptococcus suis (strain 98HAH33).